The primary structure comprises 306 residues: Aspartate carbamoyltransferase catalytic subunit (306 aa).

Carbamoyl phosphate-binding residues include Arg-55 and Thr-56. L-aspartate is bound at residue Lys-84. Residues Arg-105, His-133, and Gln-136 each contribute to the carbamoyl phosphate site. Residues Arg-166 and Arg-227 each coordinate L-aspartate. Carbamoyl phosphate-binding residues include Leu-265 and Pro-266.

It belongs to the aspartate/ornithine carbamoyltransferase superfamily. ATCase family. Heterododecamer (2C3:3R2) of six catalytic PyrB chains organized as two trimers (C3), and six regulatory PyrI chains organized as three dimers (R2).

It catalyses the reaction carbamoyl phosphate + L-aspartate = N-carbamoyl-L-aspartate + phosphate + H(+). It participates in pyrimidine metabolism; UMP biosynthesis via de novo pathway; (S)-dihydroorotate from bicarbonate: step 2/3. Catalyzes the condensation of carbamoyl phosphate and aspartate to form carbamoyl aspartate and inorganic phosphate, the committed step in the de novo pyrimidine nucleotide biosynthesis pathway. This Neisseria meningitidis serogroup A / serotype 4A (strain DSM 15465 / Z2491) protein is Aspartate carbamoyltransferase catalytic subunit.